The following is a 341-amino-acid chain: Probable long-chain-alcohol O-fatty-acyltransferase 1 (341 aa).

8 consecutive transmembrane segments (helical) span residues 7 to 27 (NLIE…YISS), 36 to 56 (LLSI…LSCV), 58 to 78 (FCAI…LLFA), 120 to 140 (PMPK…LHVY), 149 to 169 (FVVL…VLVF), 233 to 253 (MFAG…LLYF), 261 to 281 (TWEV…EIAV), and 293 to 313 (AVSG…LFLA).

It belongs to the wax synthase family.

It is found in the membrane. It carries out the reaction a long chain fatty alcohol + a fatty acyl-CoA = a wax ester + CoA. Catalyzes the final step in the synthesis of long-chain linear esters (waxes). In Arabidopsis thaliana (Mouse-ear cress), this protein is Probable long-chain-alcohol O-fatty-acyltransferase 1 (AT1).